Reading from the N-terminus, the 403-residue chain is Chalcone synthase 2 (403 aa).

59 to 66 (RFQRMCES) lines the CoA pocket. Catalysis depends on Cys168, which acts as the Acyl-thioester intermediate. 220–221 (GD) contacts substrate. Ala313 provides a ligand contact to CoA.

It belongs to the thiolase-like superfamily. Chalcone/stilbene synthases family. As to quaternary structure, homodimer.

The catalysed reaction is (E)-4-coumaroyl-CoA + 3 malonyl-CoA + 3 H(+) = 2',4,4',6'-tetrahydroxychalcone + 3 CO2 + 4 CoA. It functions in the pathway secondary metabolite biosynthesis; flavonoid biosynthesis. Its function is as follows. The primary product of this enzyme is 4,2',4',6'-tetrahydroxychalcone (also termed naringenin-chalcone or chalcone) which can under specific conditions spontaneously isomerize into naringenin. This Oryza sativa subsp. japonica (Rice) protein is Chalcone synthase 2 (CHS2).